The sequence spans 368 residues: Homoserine O-acetyltransferase (368 aa).

The AB hydrolase-1 domain maps to 43 to 346 (ILLEHALTGT…EYGHDAFLVE (304 aa)). The active-site Nucleophile is Ser145. Arg212 contacts substrate. Active-site residues include Asp307 and His340. Asp341 contributes to the substrate binding site.

The protein belongs to the AB hydrolase superfamily. MetX family. As to quaternary structure, homodimer.

The protein resides in the cytoplasm. The enzyme catalyses L-homoserine + acetyl-CoA = O-acetyl-L-homoserine + CoA. The protein operates within amino-acid biosynthesis; L-methionine biosynthesis via de novo pathway; O-acetyl-L-homoserine from L-homoserine: step 1/1. Its function is as follows. Transfers an acetyl group from acetyl-CoA to L-homoserine, forming acetyl-L-homoserine. This is Homoserine O-acetyltransferase from Listeria monocytogenes serovar 1/2a (strain ATCC BAA-679 / EGD-e).